The sequence spans 547 residues: KsdD-like steroid dehydrogenase MSMEG_5835 (547 aa).

5–36 (DVIVVGAGLAGLVAACELVERGHSVIIVDQEN) contacts FAD.

It belongs to the FAD-dependent oxidoreductase 2 family. Requires FAD as cofactor.

Its pathway is lipid metabolism; steroid biosynthesis. Functionally, able to catalyze the elimination of the C-1 and C-2 hydrogen atoms of the A-ring from the polycyclic ring structure of 3-ketosteroids, but the ketosteroid dehydrogenase activity is low compared to KsdD in the cholesterol degradation process. The low activity could be due to different substrate specificity. This chain is KsdD-like steroid dehydrogenase MSMEG_5835, found in Mycolicibacterium smegmatis (strain ATCC 700084 / mc(2)155) (Mycobacterium smegmatis).